We begin with the raw amino-acid sequence, 463 residues long: tRNA (guanine(10)-N(2))-methyltransferase TRMT11 (463 aa).

Ala2 bears the N-acetylalanine mark.

The protein belongs to the class I-like SAM-binding methyltransferase superfamily. TRM11 methyltransferase family. In terms of assembly, part of the heterodimeric TRMT11-TRM112 methyltransferase complex; this complex forms an active tRNA methyltransferase, where TRMT112 acts as an activator of the catalytic subunit TRMT11.

The protein resides in the cytoplasm. The catalysed reaction is guanosine(10) in tRNA + S-adenosyl-L-methionine = N(2)-methylguanosine(10) in tRNA + S-adenosyl-L-homocysteine + H(+). In terms of biological role, catalytic subunit of the TRMT11-TRM112 methyltransferase complex, that specifically mediates the S-adenosyl-L-methionine-dependent N(2)-methylation of guanosine nucleotide at position 10 (m2G10) in tRNAs. This is one of the major tRNA (guanine-N(2))-methyltransferases. In Pongo abelii (Sumatran orangutan), this protein is tRNA (guanine(10)-N(2))-methyltransferase TRMT11.